The chain runs to 142 residues: Large ribosomal subunit protein uL13 (142 aa).

This sequence belongs to the universal ribosomal protein uL13 family. In terms of assembly, part of the 50S ribosomal subunit.

In terms of biological role, this protein is one of the early assembly proteins of the 50S ribosomal subunit, although it is not seen to bind rRNA by itself. It is important during the early stages of 50S assembly. This Vibrio cholerae serotype O1 (strain M66-2) protein is Large ribosomal subunit protein uL13.